The sequence spans 235 residues: Small ribosomal subunit protein uS2c (235 aa).

Belongs to the universal ribosomal protein uS2 family.

It localises to the plastid. Its subcellular location is the chloroplast. This is Small ribosomal subunit protein uS2c (rps2) from Anthoceros angustus (Hornwort).